Reading from the N-terminus, the 846-residue chain is MSYTLDSLGNPSAYRRVPTETRSSFSRVSGSPSSGFRSQSWSRGSPSTVSSSYKRSALAPRLAYSSAMLSSAESSLDFSQSSSLLNGGSGGDYKLSRSNEKEQLQGLNDRFAGYIEKVHYLEQQNKEIEAEIHALRQKQASHAQLGDAYDQEIRELRATLEMVNHEKAQVQLDSDHLEEDIHRLKERFEEEARLRDDTEAAIRAVRKDIEESSMVKVELDKKVQSLQDEVAFLRSNHEEEVADLLAQIQASHITVERKDYLKTDISTALKEIRSQLECHSDQNMHQAEEWFKCRYAKLTEAAEQNKEAIRSAKEEIAEYRRQLQSKSIELESVRGTKESLERQLSDIEERHNHDLSSYQDTIQQLENELRGTKWEMARHLREYQDLLNVKMALDIEIAAYRKLLEGEETRFSTFSGSITGPLYTHRQPSVTISSKIQKTKVEAPKLKVQHKFVEEIIEETKVEDEKSEMEDALTVIAEELAASAKEEKEEAEEKEEEPEVEKSPVKSPEAKEEEEGEKEEEEEGQEEEEEEDEGVKSDQAEEGGSEKEGSSEKDEGEQEEEGETEAEGEGEEAEAKEEKKTEGKVEEMAIKEEIKVEKPEKAKSPVPKSPVEEVKPKPEAKAGKDEQKEEEKVEEKKEVAKESPKEEKVEKKEEKPKDVPDKKKAESPVKEKAVEEMITITKSVKVSLEKDTKEEKPQQQEKVKEKAEEEGGSEEEVGDKSPQESKKEDIAINGEVEGKEEEEQETQEKGSGQEEEKGVVTNGLDVSPAEEKKGEDRSDDKVVVTKKVEKITSEGGDGATKYITKSVTVTQKVEEHEETFEEKLVSTKKVEKVTSHAIVKEVTQGD.

Polar residues predominate over residues 1–10; that stretch reads MSYTLDSLGN. The tract at residues 1–52 is disordered; it reads MSYTLDSLGNPSAYRRVPTETRSSFSRVSGSPSSGFRSQSWSRGSPSTVSSS. S2 carries the post-translational modification N-acetylserine. Residues 2–104 form a head region; it reads SYTLDSLGNP…LSRSNEKEQL (103 aa). Positions 22-45 are enriched in low complexity; the sequence is RSSFSRVSGSPSSGFRSQSWSRGS. The residue at position 31 (S31) is a Phosphoserine. Omega-N-methylarginine is present on R43. The O-linked (GlcNAc) threonine glycan is linked to T48. Residue S98 is modified to Phosphoserine. The IF rod domain occupies 100-411; sequence EKEQLQGLND…KLLEGEETRF (312 aa). Residues 104–135 are coil 1A; the sequence is LQGLNDRFAGYIEKVHYLEQQNKEIEAEIHAL. Positions 136–148 are linker 1; sequence RQKQASHAQLGDA. The tract at residues 149–247 is coil 1B; sequence YDQEIRELRA…EEEVADLLAQ (99 aa). S225 is subject to Phosphoserine. Positions 248–264 are linker 12; that stretch reads IQASHITVERKDYLKTD. The coil 2A stretch occupies residues 265–286; it reads ISTALKEIRSQLECHSDQNMHQ. The linker 2 stretch occupies residues 287-290; that stretch reads AEEW. The coil 2B stretch occupies residues 291–411; the sequence is FKCRYAKLTE…KLLEGEETRF (121 aa). Phosphotyrosine is present on Y319. A phosphoserine mark is found at S345, S417, and S429. The interval 412-845 is tail; it reads STFSGSITGP…HAIVKEVTQG (434 aa). An O-linked (GlcNAc) threonine glycan is attached at T431. Phosphoserine is present on residues S467 and S483. The interval 483 to 783 is disordered; sequence SAKEEKEEAE…GEDRSDDKVV (301 aa). A compositionally biased stretch (acidic residues) spans 489–499; it reads EEAEEKEEEPE. The span at 500 to 510 shows a compositional bias: basic and acidic residues; it reads VEKSPVKSPEA. A phosphoserine mark is found at S503 and S507. The segment covering 511–533 has biased composition (acidic residues); that stretch reads KEEEEGEKEEEEEGQEEEEEEDE. The span at 534–553 shows a compositional bias: basic and acidic residues; that stretch reads GVKSDQAEEGGSEKEGSSEK. Phosphoserine occurs at positions 537, 545, 550, and 551. Acidic residues predominate over residues 554 to 575; sequence DEGEQEEEGETEAEGEGEEAEA. At T564 the chain carries Phosphothreonine. The span at 576–603 shows a compositional bias: basic and acidic residues; it reads KEEKKTEGKVEEMAIKEEIKVEKPEKAK. 9 positions are modified to phosphoserine: S604, S609, S643, S667, S687, S713, S721, S751, and S767. Basic and acidic residues-rich tracts occupy residues 610–675 and 687–709; these read PVEE…KAVE and SLEK…KAEE. 2 stretches are compositionally biased toward basic and acidic residues: residues 718–730 and 746–758; these read GDKS…KEDI and TQEK…EEKG. Basic and acidic residues predominate over residues 769 to 783; sequence AEEKKGEDRSDDKVV.

The protein belongs to the intermediate filament family. In terms of assembly, forms heterodimers with NEFL; which can further hetero-oligomerize (in vitro). Forms heterodimers with INA (in vitro). In terms of processing, there are a number of repeats of the tripeptide K-S-P, NFM is phosphorylated on a number of the serines in this motif. It is thought that phosphorylation of NFM results in the formation of interfilament cross bridges that are important in the maintenance of axonal caliber. Phosphorylation seems to play a major role in the functioning of the larger neurofilament polypeptides (NF-M and NF-H), the levels of phosphorylation being altered developmentally and coincidentally with a change in the neurofilament function. Post-translationally, phosphorylated in the head and rod regions by the PKC kinase PKN1, leading to the inhibition of polymerization. In terms of tissue distribution, expressed in the dorsal root ganglion neurons (at protein level).

The protein resides in the cytoplasm. The protein localises to the cytoskeleton. It localises to the cell projection. It is found in the axon. Functionally, neurofilaments usually contain three intermediate filament proteins: NEFL, NEFM, and NEFH which are involved in the maintenance of neuronal caliber. May additionally cooperate with the neuronal intermediate filament proteins PRPH and INA to form neuronal filamentous networks. This is Neurofilament medium polypeptide (Nefm) from Rattus norvegicus (Rat).